Consider the following 103-residue polypeptide: Large ribosomal subunit protein bL21 (103 aa).

It belongs to the bacterial ribosomal protein bL21 family. As to quaternary structure, part of the 50S ribosomal subunit. Contacts protein L20.

This protein binds to 23S rRNA in the presence of protein L20. This chain is Large ribosomal subunit protein bL21, found in Nocardia farcinica (strain IFM 10152).